A 365-amino-acid polypeptide reads, in one-letter code: Alanine racemase (365 aa).

K32 (proton acceptor; specific for D-alanine) is an active-site residue. K32 bears the N6-(pyridoxal phosphate)lysine mark. R128 lines the substrate pocket. Y257 (proton acceptor; specific for L-alanine) is an active-site residue. M305 contacts substrate.

The protein belongs to the alanine racemase family. Pyridoxal 5'-phosphate serves as cofactor.

The catalysed reaction is L-alanine = D-alanine. The protein operates within amino-acid biosynthesis; D-alanine biosynthesis; D-alanine from L-alanine: step 1/1. Its function is as follows. Catalyzes the interconversion of L-alanine and D-alanine. May also act on other amino acids. The chain is Alanine racemase (alr) from Francisella philomiragia subsp. philomiragia (strain ATCC 25017 / CCUG 19701 / FSC 153 / O#319-036).